The chain runs to 70 residues: DNA-directed RNA polymerase subunit epsilon (70 aa).

Belongs to the RNA polymerase subunit epsilon family. RNAP is composed of a core of 2 alpha, a beta and a beta' subunit. The core is associated with a delta subunit, and at least one of epsilon or omega. When a sigma factor is associated with the core the holoenzyme is formed, which can initiate transcription.

The catalysed reaction is RNA(n) + a ribonucleoside 5'-triphosphate = RNA(n+1) + diphosphate. Functionally, a non-essential component of RNA polymerase (RNAP). The polypeptide is DNA-directed RNA polymerase subunit epsilon (Bacillus mycoides (strain KBAB4) (Bacillus weihenstephanensis)).